A 105-amino-acid chain; its full sequence is Mitomycin resistance protein McrB (105 aa).

Functionally, involved in mitomycin resistance. May operate with McrA or may be a type of transcriptional activator protein. This is Mitomycin resistance protein McrB (mcrB) from Streptomyces lavendulae.